The chain runs to 113 residues: Na(+)/H(+) antiporter subunit C (113 aa).

3 helical membrane passes run 4 to 21 (LMAVLAGIIFMAATYLLL), 28 to 47 (VIIGTALLSHGVHLMLLTMG), and 67 to 89 (PLPQALILTAIVISFGVTSFILV).

Belongs to the CPA3 antiporters (TC 2.A.63) subunit C family. As to quaternary structure, forms a heterooligomeric complex that consists of seven subunits: MrpA, MrpB, MrpC, MrpD, MrpE, MrpF and MrpG.

The protein resides in the cell membrane. Mrp complex is a Na(+)/H(+) antiporter that is considered to be the major Na(+) excretion system in B.subtilis. Has a major role in Na(+) resistance and a minor role in Na(+)- and K(+)-dependent pH homeostasis as compared to TetB. MrpA may be the actual Na(+)/H(+) antiporter, although the six other Mrp proteins are all required for Na(+)/H(+) antiport activity and Na(+) resistance. MrpA is required for initiation of sporulation when external Na(+) concentration increases. Also transports Li(+) but not K(+), Ca(2+) or Mg(2+). The protein is Na(+)/H(+) antiporter subunit C (mrpC) of Bacillus subtilis (strain 168).